The chain runs to 320 residues: Cytochrome f (320 aa).

Residues 1–35 (MQTRNAFSWLKKQITRSISVSLMIYILTRTSISSA) form the signal peptide. Tyr-36, Cys-56, Cys-59, and His-60 together coordinate heme. A helical membrane pass occupies residues 286-306 (VQGLLFFLASVILAQIFLVLK).

This sequence belongs to the cytochrome f family. In terms of assembly, the 4 large subunits of the cytochrome b6-f complex are cytochrome b6, subunit IV (17 kDa polypeptide, petD), cytochrome f and the Rieske protein, while the 4 small subunits are PetG, PetL, PetM and PetN. The complex functions as a dimer. The cofactor is heme.

The protein resides in the plastid. It is found in the chloroplast thylakoid membrane. Component of the cytochrome b6-f complex, which mediates electron transfer between photosystem II (PSII) and photosystem I (PSI), cyclic electron flow around PSI, and state transitions. The polypeptide is Cytochrome f (Solanum bulbocastanum (Wild potato)).